Reading from the N-terminus, the 391-residue chain is DNA replication and repair protein RecF (391 aa).

Position 30–37 (30–37 (GLNGQGKT)) interacts with ATP.

This sequence belongs to the RecF family.

It is found in the cytoplasm. In terms of biological role, the RecF protein is involved in DNA metabolism; it is required for DNA replication and normal SOS inducibility. RecF binds preferentially to single-stranded, linear DNA. It also seems to bind ATP. The protein is DNA replication and repair protein RecF of Kineococcus radiotolerans (strain ATCC BAA-149 / DSM 14245 / SRS30216).